Reading from the N-terminus, the 588-residue chain is Adenine deaminase (588 aa).

This sequence belongs to the metallo-dependent hydrolases superfamily. Adenine deaminase family. In terms of assembly, homodimer. It depends on Mn(2+) as a cofactor.

It carries out the reaction adenine + H2O + H(+) = hypoxanthine + NH4(+). This Escherichia coli O6:H1 (strain CFT073 / ATCC 700928 / UPEC) protein is Adenine deaminase.